The primary structure comprises 504 residues: Anaerobic nitric oxide reductase transcription regulator NorR (504 aa).

At aspartate 57 the chain carries 4-aspartylphosphate. Residues 187 to 416 (MIGLSPGMTQ…LEHAIHRAVV (230 aa)) enclose the Sigma-54 factor interaction domain. ATP-binding positions include 215–222 (GETGTGKE) and 278–287 (ADNGTLFLDE). Positions 479-498 (WAACARMLETDVANLHRLAK) form a DNA-binding region, H-T-H motif.

It functions in the pathway nitrogen metabolism; nitric oxide reduction. Required for the expression of anaerobic nitric oxide (NO) reductase, acts as a transcriptional activator for at least the norVW operon. Activation also requires sigma-54. The sequence is that of Anaerobic nitric oxide reductase transcription regulator NorR from Escherichia coli (strain SE11).